Consider the following 643-residue polypeptide: Transmembrane 9 superfamily member 4 (643 aa).

The first 23 residues, 1–23 (MAAAMIWWPRFLLLLCLTCKGST), serve as a signal peptide directing secretion. Topologically, residues 24–282 (FYVPGVAPIN…TMSDVQIHWF (259 aa)) are extracellular. The chain crosses the membrane as a helical span at residues 283–303 (SIINSVVVVFFLSGILSMIII). The Cytoplasmic portion of the chain corresponds to 304 to 347 (RTLRKDIANYNKEDDIEDTMEESGWKLVHGDVFRPPQYPMILSS). Tyr313 is subject to Phosphotyrosine. Residues 348–368 (LLGSGIQLFCMILIVIFVAML) form a helical membrane-spanning segment. Residues 369-377 (GMLSPSSRG) lie on the Extracellular side of the membrane. A helical membrane pass occupies residues 378–398 (ALMTTACFLFMFMGVFGGFSA). The Cytoplasmic portion of the chain corresponds to 399 to 417 (GRLYRTLKGHRWKKGAFCT). A helical transmembrane segment spans residues 418 to 438 (ATLYPGVVFGICFVLNCFIWG). Over 439–450 (KHSSGAVPFPTM) the chain is Extracellular. The helical transmembrane segment at 451–471 (VALLCMWFGISLPLVYLGYYF) threads the bilayer. Topologically, residues 472 to 502 (GFRKQPYDNPVRTNQIPRQIPEQRWYMNRFV) are cytoplasmic. A helical transmembrane segment spans residues 503–523 (GILMAGILPFGAMFIELFFIF). Residues 524–536 (SAIWENQFYYLFG) are Extracellular-facing. A helical transmembrane segment spans residues 537 to 557 (FLFLVFIILVVSCSQISIVMV). At 558–571 (YFQLCAEDYRWWWR) the chain is on the cytoplasmic side. A helical transmembrane segment spans residues 572-592 (NFLVSGGSAFYVLVYAIFYFV). Over 593–599 (NKLDIVE) the chain is Extracellular. Residues 600–620 (FIPSLLYFGYTTLMVLSFWLL) traverse the membrane as a helical segment. Residues 621 to 643 (TGTIGFYAAYMFVRKIYAAVKID) lie on the Cytoplasmic side of the membrane.

It belongs to the nonaspanin (TM9SF) (TC 9.A.2) family.

The protein resides in the membrane. It localises to the golgi apparatus. The protein localises to the early endosome. Associates with proteins harboring glycine-rich transmembrane domains and ensures their efficient localization to the cell surface. The polypeptide is Transmembrane 9 superfamily member 4 (Tm9sf4) (Mus musculus (Mouse)).